A 97-amino-acid chain; its full sequence is Aspartyl/glutamyl-tRNA(Asn/Gln) amidotransferase subunit C (97 aa).

A disordered region spans residues 58–78 (LPQGRLRKDTPRDPLDRENAL). The span at 63-77 (LRKDTPRDPLDRENA) shows a compositional bias: basic and acidic residues.

Belongs to the GatC family. Heterotrimer of A, B and C subunits.

It carries out the reaction L-glutamyl-tRNA(Gln) + L-glutamine + ATP + H2O = L-glutaminyl-tRNA(Gln) + L-glutamate + ADP + phosphate + H(+). It catalyses the reaction L-aspartyl-tRNA(Asn) + L-glutamine + ATP + H2O = L-asparaginyl-tRNA(Asn) + L-glutamate + ADP + phosphate + 2 H(+). In terms of biological role, allows the formation of correctly charged Asn-tRNA(Asn) or Gln-tRNA(Gln) through the transamidation of misacylated Asp-tRNA(Asn) or Glu-tRNA(Gln) in organisms which lack either or both of asparaginyl-tRNA or glutaminyl-tRNA synthetases. The reaction takes place in the presence of glutamine and ATP through an activated phospho-Asp-tRNA(Asn) or phospho-Glu-tRNA(Gln). The polypeptide is Aspartyl/glutamyl-tRNA(Asn/Gln) amidotransferase subunit C (Saccharolobus islandicus (strain Y.N.15.51 / Yellowstone #2) (Sulfolobus islandicus)).